Reading from the N-terminus, the 122-residue chain is UPF0102 protein CA_C1763 (122 aa).

This sequence belongs to the UPF0102 family.

The chain is UPF0102 protein CA_C1763 from Clostridium acetobutylicum (strain ATCC 824 / DSM 792 / JCM 1419 / IAM 19013 / LMG 5710 / NBRC 13948 / NRRL B-527 / VKM B-1787 / 2291 / W).